Reading from the N-terminus, the 268-residue chain is Thymidylate synthase (268 aa).

DUMP is bound at residue arginine 27. Histidine 57 serves as a coordination point for (6R)-5,10-methylene-5,6,7,8-tetrahydrofolate. Residue 132–133 (RR) coordinates dUMP. The Nucleophile role is filled by cysteine 152. Residues 172-175 (RSAD), asparagine 183, and 213-215 (HVY) contribute to the dUMP site. Aspartate 175 is a (6R)-5,10-methylene-5,6,7,8-tetrahydrofolate binding site. Alanine 267 is a (6R)-5,10-methylene-5,6,7,8-tetrahydrofolate binding site.

Belongs to the thymidylate synthase family. Bacterial-type ThyA subfamily. As to quaternary structure, homodimer.

It localises to the cytoplasm. It carries out the reaction dUMP + (6R)-5,10-methylene-5,6,7,8-tetrahydrofolate = 7,8-dihydrofolate + dTMP. Its pathway is pyrimidine metabolism; dTTP biosynthesis. In terms of biological role, catalyzes the reductive methylation of 2'-deoxyuridine-5'-monophosphate (dUMP) to 2'-deoxythymidine-5'-monophosphate (dTMP) while utilizing 5,10-methylenetetrahydrofolate (mTHF) as the methyl donor and reductant in the reaction, yielding dihydrofolate (DHF) as a by-product. This enzymatic reaction provides an intracellular de novo source of dTMP, an essential precursor for DNA biosynthesis. The sequence is that of Thymidylate synthase from Kineococcus radiotolerans (strain ATCC BAA-149 / DSM 14245 / SRS30216).